Here is a 154-residue protein sequence, read N- to C-terminus: Myoglobin (154 aa).

A Globin domain is found at glycine 2–lysine 148. The residue at position 4 (serine 4) is a Phosphoserine. Histidine 65 lines the nitrite pocket. Histidine 65 is an O2 binding site. Threonine 68 carries the post-translational modification Phosphothreonine. Histidine 94 lines the heme b pocket.

It belongs to the globin family. Monomeric.

The protein localises to the cytoplasm. It is found in the sarcoplasm. The catalysed reaction is Fe(III)-heme b-[protein] + nitric oxide + H2O = Fe(II)-heme b-[protein] + nitrite + 2 H(+). It catalyses the reaction H2O2 + AH2 = A + 2 H2O. In terms of biological role, monomeric heme protein which primary function is to store oxygen and facilitate its diffusion within muscle tissues. Reversibly binds oxygen through a pentacoordinated heme iron and enables its timely and efficient release as needed during periods of heightened demand. Depending on the oxidative conditions of tissues and cells, and in addition to its ability to bind oxygen, it also has a nitrite reductase activity whereby it regulates the production of bioactive nitric oxide. Under stress conditions, like hypoxia and anoxia, it also protects cells against reactive oxygen species thanks to its pseudoperoxidase activity. The protein is Myoglobin (MB) of Oryctolagus cuniculus (Rabbit).